Consider the following 505-residue polypeptide: Ion-translocating oxidoreductase complex subunit C (505 aa).

4Fe-4S ferredoxin-type domains are found at residues 381–410 (ELNN…EQLY) and 420–449 (KTQI…MSYY). [4Fe-4S] cluster-binding residues include Cys390, Cys393, Cys396, Cys400, Cys429, Cys432, Cys435, and Cys439.

Belongs to the 4Fe4S bacterial-type ferredoxin family. RnfC subfamily. The complex is composed of six subunits: RnfA, RnfB, RnfC, RnfD, RnfE and RnfG. The cofactor is [4Fe-4S] cluster.

The protein localises to the cell inner membrane. Functionally, part of a membrane-bound complex that couples electron transfer with translocation of ions across the membrane. This Buchnera aphidicola subsp. Baizongia pistaciae (strain Bp) protein is Ion-translocating oxidoreductase complex subunit C.